The following is a 104-amino-acid chain: Protein SMALL AUXIN UP-REGULATED RNA 12 (104 aa).

Belongs to the ARG7 family. Expressed in flowers and etiolated hypocotyls.

Its subcellular location is the cell membrane. Its function is as follows. Provide a mechanistic link between auxin and plasma membrane H(+)-ATPases (PM H(+)-ATPases, e.g. AHA1 and AHA2), and triggers PM H(+)-ATPases activity by promoting phosphorylation of their C-terminal autoinhibitory domain as a result of PP2C-D subfamily of type 2C phosphatases inhibition, thus leading to the acidification of the apoplast and the facilitation of solutes and water uptake to drive cell expansion. Triggers plant growth probably by promoting cell elongation. Regulates branch angles and bending. This chain is Protein SMALL AUXIN UP-REGULATED RNA 12, found in Arabidopsis thaliana (Mouse-ear cress).